The chain runs to 311 residues: Methionyl-tRNA formyltransferase (311 aa).

Residue 112–115 coordinates (6S)-5,6,7,8-tetrahydrofolate; the sequence is SLLP.

The protein belongs to the Fmt family.

It carries out the reaction L-methionyl-tRNA(fMet) + (6R)-10-formyltetrahydrofolate = N-formyl-L-methionyl-tRNA(fMet) + (6S)-5,6,7,8-tetrahydrofolate + H(+). Attaches a formyl group to the free amino group of methionyl-tRNA(fMet). The formyl group appears to play a dual role in the initiator identity of N-formylmethionyl-tRNA by promoting its recognition by IF2 and preventing the misappropriation of this tRNA by the elongation apparatus. The polypeptide is Methionyl-tRNA formyltransferase (Sinorhizobium medicae (strain WSM419) (Ensifer medicae)).